We begin with the raw amino-acid sequence, 343 residues long: Ornithine carbamoyltransferase, catabolic (343 aa).

62-65 contacts carbamoyl phosphate; the sequence is STRT. His-79 provides a ligand contact to Ni(2+). Carbamoyl phosphate-binding positions include Gln-89, Arg-113, and 140–143; that span reads HPTQ. Residues Asn-172, Asp-236, and 240-241 contribute to the L-ornithine site; that span reads SM. Carbamoyl phosphate-binding positions include 278 to 279 and Arg-323; that span reads CL.

Belongs to the aspartate/ornithine carbamoyltransferase superfamily. OTCase family. In terms of assembly, homohexamer; dimer of trimers. Requires Ni(2+) as cofactor.

It is found in the cytoplasm. It catalyses the reaction carbamoyl phosphate + L-ornithine = L-citrulline + phosphate + H(+). It participates in amino-acid degradation; L-arginine degradation via ADI pathway; carbamoyl phosphate from L-arginine: step 2/2. Involved in the catabolism of arginine. Catalyzes the phosphorolysis of citrulline, the reverse reaction of the biosynthetic one, yielding ornithine and carbamoyl phosphate which serve to generate ATP from ADP. The protein is Ornithine carbamoyltransferase, catabolic of Lentilactobacillus hilgardii (Lactobacillus hilgardii).